Consider the following 626-residue polypeptide: DNA-directed RNA polymerase subunit gamma (626 aa).

Cysteine 71, cysteine 73, cysteine 86, and cysteine 89 together coordinate Zn(2+). Mg(2+) is bound by residues aspartate 467, aspartate 469, and aspartate 471.

Belongs to the RNA polymerase beta' chain family. RpoC1 subfamily. In cyanobacteria the RNAP catalytic core is composed of 2 alpha, 1 beta, 1 beta', 1 gamma and 1 omega subunit. When a sigma factor is associated with the core the holoenzyme is formed, which can initiate transcription. Mg(2+) is required as a cofactor. It depends on Zn(2+) as a cofactor.

It carries out the reaction RNA(n) + a ribonucleoside 5'-triphosphate = RNA(n+1) + diphosphate. Functionally, DNA-dependent RNA polymerase catalyzes the transcription of DNA into RNA using the four ribonucleoside triphosphates as substrates. The protein is DNA-directed RNA polymerase subunit gamma of Synechocystis sp. (strain ATCC 27184 / PCC 6803 / Kazusa).